We begin with the raw amino-acid sequence, 424 residues long: UDP-N-acetylglucosamine 1-carboxyvinyltransferase (424 aa).

22-23 is a phosphoenolpyruvate binding site; it reads KN. Arg-96 is a binding site for UDP-N-acetyl-alpha-D-glucosamine. Cys-120 serves as the catalytic Proton donor. Cys-120 carries the 2-(S-cysteinyl)pyruvic acid O-phosphothioketal modification. UDP-N-acetyl-alpha-D-glucosamine-binding positions include 125 to 129, Asp-312, and Ile-334; that span reads RPVDQ.

It belongs to the EPSP synthase family. MurA subfamily.

It localises to the cytoplasm. The catalysed reaction is phosphoenolpyruvate + UDP-N-acetyl-alpha-D-glucosamine = UDP-N-acetyl-3-O-(1-carboxyvinyl)-alpha-D-glucosamine + phosphate. The protein operates within cell wall biogenesis; peptidoglycan biosynthesis. Its function is as follows. Cell wall formation. Adds enolpyruvyl to UDP-N-acetylglucosamine. The polypeptide is UDP-N-acetylglucosamine 1-carboxyvinyltransferase (Polynucleobacter necessarius subsp. necessarius (strain STIR1)).